The sequence spans 280 residues: Ribulose-phosphate 3-epimerase, chloroplastic (280 aa).

Residues 1 to 45 constitute a chloroplast transit peptide; the sequence is SLGSSTLLQSQISGFGGSQKLQKISFSNPNSLTFTRRRIQTVVNA. S62 provides a ligand contact to substrate. 3 residues coordinate a divalent metal cation: H87, D89, and H120. D89 acts as the Proton acceptor in catalysis. Residues H120, 198–201, 231–233, and 253–254 contribute to the substrate site; these read GFGG, DGG, and GS. D231 contacts a divalent metal cation. D231 (proton donor) is an active-site residue.

Belongs to the ribulose-phosphate 3-epimerase family. In terms of assembly, homohexamer. The cofactor is Co(2+). Requires Fe(2+) as cofactor. It depends on Mn(2+) as a cofactor. Zn(2+) is required as a cofactor. Highest level of expression in leaves, whereas it is low in roots, tubers, and stems.

It is found in the plastid. The protein localises to the chloroplast thylakoid membrane. It catalyses the reaction D-ribulose 5-phosphate = D-xylulose 5-phosphate. It participates in carbohydrate biosynthesis; Calvin cycle. Catalyzes the reversible epimerization of D-ribulose 5-phosphate to D-xylulose 5-phosphate. The sequence is that of Ribulose-phosphate 3-epimerase, chloroplastic from Solanum tuberosum (Potato).